We begin with the raw amino-acid sequence, 246 residues long: Probable 2-phosphosulfolactate phosphatase (246 aa).

It belongs to the ComB family. Requires Mg(2+) as cofactor.

The catalysed reaction is (2R)-O-phospho-3-sulfolactate + H2O = (2R)-3-sulfolactate + phosphate. The polypeptide is Probable 2-phosphosulfolactate phosphatase (Synechococcus sp. (strain WH7803)).